Reading from the N-terminus, the 90-residue chain is MENIQLINIGFGNIVSANRVIAIVSPESAPIKRIITDARERGQLIDATYGRRTRAVIITDSSHVVLSAIQPETVAHRFVVNKETATINSN.

Belongs to the RemA family.

In Crocosphaera subtropica (strain ATCC 51142 / BH68) (Cyanothece sp. (strain ATCC 51142)), this protein is Putative regulatory protein cce_4590.